Here is a 350-residue protein sequence, read N- to C-terminus: Holliday junction branch migration complex subunit RuvB (350 aa).

Residues 1 to 183 are large ATPase domain (RuvB-L); the sequence is MSAERLVNPH…FVAVHRLVFY (183 aa). Residues leucine 22, arginine 23, glycine 64, lysine 67, threonine 68, serine 69, 130–132, arginine 173, tyrosine 183, and arginine 220 contribute to the ATP site; that span reads EDF. Position 68 (threonine 68) interacts with Mg(2+). The tract at residues 184-254 is small ATPAse domain (RuvB-S); it reads SDAAMTEIVS…VAREALAQLE (71 aa). A head domain (RuvB-H) region spans residues 257–350; that stretch reads ELGLDENDRR…ESGPQQGTLF (94 aa). Residues arginine 312 and arginine 317 each coordinate DNA.

This sequence belongs to the RuvB family. In terms of assembly, homohexamer. Forms an RuvA(8)-RuvB(12)-Holliday junction (HJ) complex. HJ DNA is sandwiched between 2 RuvA tetramers; dsDNA enters through RuvA and exits via RuvB. An RuvB hexamer assembles on each DNA strand where it exits the tetramer. Each RuvB hexamer is contacted by two RuvA subunits (via domain III) on 2 adjacent RuvB subunits; this complex drives branch migration. In the full resolvosome a probable DNA-RuvA(4)-RuvB(12)-RuvC(2) complex forms which resolves the HJ.

The protein localises to the cytoplasm. The enzyme catalyses ATP + H2O = ADP + phosphate + H(+). In terms of biological role, the RuvA-RuvB-RuvC complex processes Holliday junction (HJ) DNA during genetic recombination and DNA repair, while the RuvA-RuvB complex plays an important role in the rescue of blocked DNA replication forks via replication fork reversal (RFR). RuvA specifically binds to HJ cruciform DNA, conferring on it an open structure. The RuvB hexamer acts as an ATP-dependent pump, pulling dsDNA into and through the RuvAB complex. RuvB forms 2 homohexamers on either side of HJ DNA bound by 1 or 2 RuvA tetramers; 4 subunits per hexamer contact DNA at a time. Coordinated motions by a converter formed by DNA-disengaged RuvB subunits stimulates ATP hydrolysis and nucleotide exchange. Immobilization of the converter enables RuvB to convert the ATP-contained energy into a lever motion, pulling 2 nucleotides of DNA out of the RuvA tetramer per ATP hydrolyzed, thus driving DNA branch migration. The RuvB motors rotate together with the DNA substrate, which together with the progressing nucleotide cycle form the mechanistic basis for DNA recombination by continuous HJ branch migration. Branch migration allows RuvC to scan DNA until it finds its consensus sequence, where it cleaves and resolves cruciform DNA. This chain is Holliday junction branch migration complex subunit RuvB, found in Chloroflexus aggregans (strain MD-66 / DSM 9485).